The following is a 335-amino-acid chain: Olfactory receptor 10R2 (335 aa).

Residues 1-45 lie on the Extracellular side of the membrane; sequence MPQILIFTYLNMFYFFPPLQILAENLTMVTEFLLLGFSSLGEIQL. An N-linked (GlcNAc...) asparagine glycan is attached at N25. The helical transmembrane segment at 46–66 threads the bilayer; it reads ALFVVFLFLYLVILSGNVTII. Residues 67-74 lie on the Cytoplasmic side of the membrane; sequence SVIHLDKS. Residues 75–95 form a helical membrane-spanning segment; sequence LHTPMYFFLGILSTSETFYTF. At 96–119 the chain is on the extracellular side; the sequence is VILPKMLINLLSVARTISFNCCAL. C117 and C209 form a disulfide bridge. A helical membrane pass occupies residues 120-140; sequence QMFFFLGFAITNCLLLGVMGY. Over 141–159 the chain is Cytoplasmic; that stretch reads DRYAAICHPLHYPTLMSWQ. The chain crosses the membrane as a helical span at residues 160-180; sequence VCGKLAAACAIGGFLASLTVV. Residues 181-217 lie on the Extracellular side of the membrane; it reads NLVFSLPFCSANKVNHYFCDISAVILLACTNTDVNEF. A helical membrane pass occupies residues 218–237; it reads VIFICGVLVLVVPFLFICVS. The Cytoplasmic segment spans residues 238–257; that stretch reads YLCILRTILKIPSAEGRRKA. The helical transmembrane segment at 258–278 threads the bilayer; sequence FSTCASHLSVVIVHYGCASFI. At 279 to 291 the chain is on the extracellular side; the sequence is YLRPTANYVSNKD. The chain crosses the membrane as a helical span at residues 292–312; it reads RLVTVTYTIVTPLLNPMVYSL. At 313-335 the chain is on the cytoplasmic side; sequence RNKDVQLAIRKVLGKKGSLKLYN.

It belongs to the G-protein coupled receptor 1 family.

The protein localises to the cell membrane. In terms of biological role, odorant receptor. The polypeptide is Olfactory receptor 10R2 (OR10R2) (Homo sapiens (Human)).